We begin with the raw amino-acid sequence, 336 residues long: Holliday junction branch migration complex subunit RuvB (336 aa).

Residues 4–184 (ADRLISADAI…FGIVQRLEFY (181 aa)) form a large ATPase domain (RuvB-L) region. Residues R24, G65, K68, T69, T70, 131–133 (EDY), R174, Y184, and R221 contribute to the ATP site. T69 lines the Mg(2+) pocket. The tract at residues 185–255 (NVADLQYIVG…VATQALDMLA (71 aa)) is small ATPAse domain (RuvB-S). Positions 258–336 (TEGFDYMDRK…HFGLTREDLG (79 aa)) are head domain (RuvB-H). DNA is bound by residues R294, R313, and R318.

The protein belongs to the RuvB family. In terms of assembly, homohexamer. Forms an RuvA(8)-RuvB(12)-Holliday junction (HJ) complex. HJ DNA is sandwiched between 2 RuvA tetramers; dsDNA enters through RuvA and exits via RuvB. An RuvB hexamer assembles on each DNA strand where it exits the tetramer. Each RuvB hexamer is contacted by two RuvA subunits (via domain III) on 2 adjacent RuvB subunits; this complex drives branch migration. In the full resolvosome a probable DNA-RuvA(4)-RuvB(12)-RuvC(2) complex forms which resolves the HJ.

It localises to the cytoplasm. It carries out the reaction ATP + H2O = ADP + phosphate + H(+). The RuvA-RuvB-RuvC complex processes Holliday junction (HJ) DNA during genetic recombination and DNA repair, while the RuvA-RuvB complex plays an important role in the rescue of blocked DNA replication forks via replication fork reversal (RFR). RuvA specifically binds to HJ cruciform DNA, conferring on it an open structure. The RuvB hexamer acts as an ATP-dependent pump, pulling dsDNA into and through the RuvAB complex. RuvB forms 2 homohexamers on either side of HJ DNA bound by 1 or 2 RuvA tetramers; 4 subunits per hexamer contact DNA at a time. Coordinated motions by a converter formed by DNA-disengaged RuvB subunits stimulates ATP hydrolysis and nucleotide exchange. Immobilization of the converter enables RuvB to convert the ATP-contained energy into a lever motion, pulling 2 nucleotides of DNA out of the RuvA tetramer per ATP hydrolyzed, thus driving DNA branch migration. The RuvB motors rotate together with the DNA substrate, which together with the progressing nucleotide cycle form the mechanistic basis for DNA recombination by continuous HJ branch migration. Branch migration allows RuvC to scan DNA until it finds its consensus sequence, where it cleaves and resolves cruciform DNA. The sequence is that of Holliday junction branch migration complex subunit RuvB from Pectobacterium carotovorum subsp. carotovorum (strain PC1).